The sequence spans 1332 residues: MDLEFAVNGERFKIDSVDPSTTLLEFLRLNTPFKSVKLGCGEGGCGACLVVLSKYDPELDQVKECCINSCLTLLCSVNGCSITTSEGLGNTKKGFHPIHKRFAGFHASQCGFCTPGMCISLYSSLANAENNSSKDFTVSEAEKSVSGNLCRCTGYRPIVDACKSFASDVDIEDLGLNSFWKKGESKEVMFKNLPPYNPKDHLVTFPEFLKKKEKVDNGSDHLKYRWTTPFSVAELHNIMEAANSGDSLKLVVGNTGTGYYKDEERFDRYIDISNIPEMSMIKKDEKGIEIGAAVTISNAIDALEKESKSSYVFKKMATHMEKIGNRSIRNSGSIGGNLVMAQSRKFPSDVTTLLLAVDASVYMLNGRKTEKVTLQEFLELSPVLDSKRVLLKVEIPSWTAPSGDDTEFLFESYRAAPRSIGNALPYLNAAFLALVSRQEASRKGVTVEKCFLAFGSYGGDHSIRAIEVETFLTGKLLSYSVLYEAVGLLKGIIVPGKDTLHSEYRKSLAVGYLFEFFYPLIESGHRICSLDSGNKHNNSHVDTVKSLPFLSSSQQVLESNEFKPIGEAVIKVGAALQASGEAVFVDDIPTLPDCLHGAFIYSTEPLAKIKSLSFRENVTPTGVFAVLTFKDIPQQGQNIGSKTLFGPGPLFADELTRCAGQRIALVVADTQKHADMAAKLAVVEYDTKNLEQPILTVEDAVKRSSFFEVHPMFYPEPVGDVIKGMEEAERKIISSELRLGSQYFFYMEPQTALALPDEDNCVKVFSSSQAPEYVHSVIATCLGIQEHNVRVITRRVGGGFGGKAVKSMPVATACALGAYKLQRPVKMFLNRKTDMIMAGGRHPMKINYNVGFRSDGKLTALELTMLIDAGLEPDVSPIMPRNIMGPLRKYDWGALSFDVKVCKTNCLSRTAMRAPGEVQGSYIAESIIENVASSLQMDVDAVRKINLHTYDSLRKFYNHIAGDPDEYTLPLLWEKLEISSKFKERSEMVKEFNLCNVWRKRGISRVPIVHQVMQRPTPGKVSILSDGSVVVEVGGIEIGQGLWTKVQQMVAYGLGMVKCEGNEKLLDRIRVVQSDTLGMIQGGFTAGSTTSESSCEAVRLCCVILVERLKPIMDQMMMEKSGSVTWNILIQQAYGQYINLSASTLYKPEYSSMEYLNYGVGVSEVEVDLVTGKTEILRSDIIYDCGKSLNPAVDLGQTEGAFVQGIGFFMMEEYTTDEKGLVVQQGTWDYKIPTVDTIPKHFNVEIVNTGHHKNRVLSSKASGEPPLLLAASVHCATRSAIREARKHSLSSNFIDGSDSEFELPVPATMPVVKSLCGLYSVEKYLQGKIKGQ.

The region spanning 1–88 (MDLEFAVNGE…GCSITTSEGL (88 aa)) is the 2Fe-2S ferredoxin-type domain. [2Fe-2S] cluster is bound by residues cysteine 40, cysteine 45, and cysteine 48. In terms of domain architecture, FAD-binding PCMH-type spans 219–400 (SDHLKYRWTT…LKVEIPSWTA (182 aa)).

It belongs to the xanthine dehydrogenase family. Aldehyde oxidases (AO) are homodimers and heterodimers of AO subunits. AO-delta is a AAO3 homodimer. AAO3 also forms a dimer with AAO2. Interacts with PUB44, and this interaction probably results in targeting of this protein to the proteasome. The cofactor is [2Fe-2S] cluster. It depends on FAD as a cofactor. Requires Mo-molybdopterin as cofactor. Expressed in vascular tissues of all organs, particularly in phloem companion cells and xylem parenchymatic cells. Highly expressed in roots and rosettes, and to lower extent in seedlings, stems and flowers. Expressed at very low levels in siliques and dry seeds. Also detected in root dividing cells (tips and primordia), in mesophyll cells and inside the guard cells.

The protein localises to the cytoplasm. It catalyses the reaction 2-cis-(+)-abscisic aldehyde + O2 + H2O = 2-cis-(+)-abscisate + H2O2 + H(+). The catalysed reaction is 1-naphthaldehyde + O2 + H2O = 1-naphthoate + H2O2 + H(+). It carries out the reaction indole-3-acetaldehyde + O2 + H2O = (indol-3-yl)acetate + H2O2 + H(+). Functionally, in higher plants aldehyde oxidases (AO) appear to be homo- and heterodimeric assemblies of AO subunits with probably different physiological functions. AO-delta may be involved in the last step of abscisic acid biosynthesis, at least in leaves and seeds. In vitro, AO-delta oxidizes abscisic aldehyde to abscisic acid (ABA). In vitro, AO-delta also uses 1-naphthaldehyde, indole-3-aldehyde (IAld), benzaldehyde and cinnamaldehyde as substrate; the AAO2-AAO3 dimer also uses abscisic aldehyde as substrate. The protein is Abscisic-aldehyde oxidase (AAO3) of Arabidopsis thaliana (Mouse-ear cress).